A 117-amino-acid polypeptide reads, in one-letter code: NADH-ubiquinone oxidoreductase chain 3 (117 aa).

3 helical membrane passes run 8 to 28 (LIYF…SFIF), 61 to 81 (LVAI…PWAV), and 86 to 106 (IGFF…IGFI).

This sequence belongs to the complex I subunit 3 family.

The protein resides in the mitochondrion membrane. The enzyme catalyses a ubiquinone + NADH + 5 H(+)(in) = a ubiquinol + NAD(+) + 4 H(+)(out). Its function is as follows. Core subunit of the mitochondrial membrane respiratory chain NADH dehydrogenase (Complex I) that is believed to belong to the minimal assembly required for catalysis. Complex I functions in the transfer of electrons from NADH to the respiratory chain. The immediate electron acceptor for the enzyme is believed to be ubiquinone. The sequence is that of NADH-ubiquinone oxidoreductase chain 3 (ND3) from Tetraselmis subcordiformis (Marine green alga).